Here is a 129-residue protein sequence, read N- to C-terminus: uncharacterized protein (129 aa).

The N-terminal stretch at 1–27 (MLMRKKKLLSRISFGSLFLLCGTILSA) is a signal peptide. The N-palmitoyl cysteine moiety is linked to residue C28. C28 carries the S-diacylglycerol cysteine lipid modification.

The protein belongs to the MG439/MG440 family.

The protein localises to the cell membrane. This is an uncharacterized protein from Mycoplasma pneumoniae (strain ATCC 29342 / M129 / Subtype 1) (Mycoplasmoides pneumoniae).